The chain runs to 509 residues: Scavenger receptor class B member 1 (509 aa).

The Cytoplasmic portion of the chain corresponds to 1-11; sequence MGSRSRARQVA. A helical membrane pass occupies residues 12–32; that stretch reads AALGFVGLLLAALGAVMIVMV. At 33 to 439 the chain is on the extracellular side; that stretch reads PSIIKQQVLK…FYTQLVLMPK (407 aa). N-linked (GlcNAc...) asparagine glycans are attached at residues asparagine 102, asparagine 108, asparagine 173, asparagine 212, asparagine 255, asparagine 310, asparagine 330, and asparagine 383. Cysteine 251 and cysteine 384 are oxidised to a cystine. Residues 440-460 form a helical membrane-spanning segment; the sequence is VLHYAQYVLLALGCVLLFIPI. The Cytoplasmic portion of the chain corresponds to 461-509; the sequence is VYQIRSQEKCYLFWSSSKKGSKDKEAIQAYSESLMTPAPKGTVLQEARL.

Belongs to the CD36 family. The C-terminal region binds to PDZK1. In terms of processing, N-glycosylated. Post-translationally, the six cysteines of the extracellular domain are all involved in intramolecular disulfide bonds.

It is found in the cell membrane. The protein resides in the membrane. It localises to the caveola. Its function is as follows. Receptor for different ligands such as phospholipids, cholesterol ester, lipoproteins, phosphatidylserine and apoptotic cells. Receptor for HDL, mediating selective uptake of cholesteryl ether and HDL-dependent cholesterol efflux. Also facilitates the flux of free and esterified cholesterol between the cell surface and apoB-containing lipoproteins and modified lipoproteins, although less efficiently than HDL. May be involved in the phagocytosis of apoptotic cells, via its phosphatidylserine binding activity. In Sus scrofa (Pig), this protein is Scavenger receptor class B member 1 (SCARB1).